We begin with the raw amino-acid sequence, 230 residues long: uncharacterized protein (230 aa).

The tract at residues 1–57 is disordered; sequence MPGPHSPNPGVGTNGPAPYPEPSSHEPQALDYPHDLGAAEPAFAPGPADDAALPPAA. Positions 38–55 are enriched in low complexity; sequence AAEPAFAPGPADDAALPP. Residues 75-95 traverse the membrane as a helical segment; that stretch reads LLIGIVVALALVSAMTAAIIY.

It localises to the membrane. This is an uncharacterized protein from Mycobacterium tuberculosis (strain CDC 1551 / Oshkosh).